The sequence spans 159 residues: CASP-like protein 1C1 (159 aa).

Over 1–6 the chain is Cytoplasmic; the sequence is MAKIKR. The helical transmembrane segment at 7-27 threads the bilayer; it reads IITTLVRLLVLGAALSATIVM. At 28–50 the chain is on the extracellular side; that stretch reads VTSHDSAEVLNLSFDAKYTNARA. An N-linked (GlcNAc...) asparagine glycan is attached at Asn-38. The chain crosses the membrane as a helical span at residues 51–73; that stretch reads FVYFAITNAIASGYSFIALFLSF. Residues 74–86 are Cytoplasmic-facing; that stretch reads STPLWHLVFLLDV. Residues 87–107 form a helical membrane-spanning segment; the sequence is FMTLLLTSSISVALAIADVGK. The Extracellular portion of the chain corresponds to 108 to 130; the sequence is KGNSHAGWLPVCGQVPEFCDHVT. Residues 131 to 151 form a helical membrane-spanning segment; that stretch reads GALIAGFSAAVLYLVLLLFSI. At 152–159 the chain is on the cytoplasmic side; sequence HAVLNPKP.

Belongs to the Casparian strip membrane proteins (CASP) family. As to quaternary structure, homodimer and heterodimers.

It localises to the cell membrane. The protein is CASP-like protein 1C1 of Vitis vinifera (Grape).